The primary structure comprises 714 residues: Pre-mRNA-splicing factor CLF1 (714 aa).

12 HAT repeats span residues 48 to 80 (SFQL…WEVK), 83 to 115 (HDFP…FELS), 117 to 149 (KNIT…TEET), 151 to 182 (KNYQ…YEKR), 184 to 215 (DEYD…FEMN), 265 to 305 (KEYE…FEKS), 315 to 347 (SIMI…ILQQ), 349 to 384 (DNNE…IWVK), 394 to 430 (GSIE…FEIR), 435 to 470 (NGLA…LEQK), 472 to 510 (GEWD…FEKN), and 555 to 586 (MRYA…FESS).

This sequence belongs to the crooked-neck family. In terms of assembly, associated with the spliceosome.

It is found in the nucleus. In terms of biological role, involved in pre-mRNA splicing and cell cycle progression. Required for the spliceosome assembly and initiation of the DNA replication. This chain is Pre-mRNA-splicing factor CLF1 (CLF1), found in Debaryomyces hansenii (strain ATCC 36239 / CBS 767 / BCRC 21394 / JCM 1990 / NBRC 0083 / IGC 2968) (Yeast).